The sequence spans 347 residues: Ultraviolet-sensitive opsin (347 aa).

At 1–37 the chain is on the extracellular side; sequence MSGEEEFYLFKNGSIGGPWDGPQYHIAPPWAFYLQTA. N12 carries N-linked (GlcNAc...) asparagine glycosylation. A helical transmembrane segment spans residues 38-58; sequence FMGFVFMVGTPLNAIVLVVTI. Topologically, residues 59–69 are cytoplasmic; it reads KYKKLRQPLNY. Residues 70 to 90 form a helical membrane-spanning segment; sequence ILVNISFCGFLACIICIFTVF. At 91–106 the chain is on the extracellular side; that stretch reads VSSSQGYFVFGKHVCA. An intrachain disulfide couples C105 to C182. The helical transmembrane segment at 107 to 127 threads the bilayer; sequence FEGFMGATAGLVTGWSLAFLA. Topologically, residues 128 to 147 are cytoplasmic; the sequence is FERYIVICKPLGNFRFTAKH. Residues 148-168 traverse the membrane as a helical segment; it reads ALVVVVATWVIGIGVAIPPFF. Over 169–197 the chain is Extracellular; it reads GWSRYVPEGLQCSCGPDWYTVGTKYRSEY. The chain crosses the membrane as a helical span at residues 198-218; it reads YTWFLFIFCFIVPLSLIIFSY. The Cytoplasmic portion of the chain corresponds to 219 to 247; that stretch reads SQLLSALRAVAAQQQESATTQKAEREVSR. Residues 248–268 form a helical membrane-spanning segment; it reads MVVVMVGSFCVCYVPYAALAM. Residues 269 to 282 are Extracellular-facing; the sequence is YMVNNREHGIDLRL. Residues 283–303 traverse the membrane as a helical segment; sequence VTIPAFFSKSSCVYNPIIYCF. At K291 the chain carries N6-(retinylidene)lysine. Topologically, residues 304–347 are cytoplasmic; it reads MNKQFRGCIMEMVCGKPMTDDSDMSSSAQRTEVSSVSSSQVSPS. C317 carries S-palmitoyl cysteine lipidation. The interval 324–347 is disordered; sequence DSDMSSSAQRTEVSSVSSSQVSPS. The segment covering 328 to 347 has biased composition (low complexity); it reads SSSAQRTEVSSVSSSQVSPS.

It belongs to the G-protein coupled receptor 1 family. Opsin subfamily. Phosphorylated on some or all of the serine and threonine residues present in the C-terminal region. In terms of tissue distribution, cone photoreceptor cells.

The protein localises to the membrane. Visual pigments are the light-absorbing molecules that mediate vision. They consist of an apoprotein, opsin, covalently linked to cis-retinal. This chain is Ultraviolet-sensitive opsin, found in Melopsittacus undulatus (Budgerigar).